We begin with the raw amino-acid sequence, 164 residues long: Succinate dehydrogenase assembly factor 3, mitochondrial (164 aa).

The N-terminal 51 residues, 1–51 (MRPTLLRLANASGPLPLSVSQASVQLIPPIPLYRRLLRAHRLLPVDMRYMG), are a transit peptide targeting the mitochondrion. Positions 136-145 (KSPEQIEREA) are enriched in basic and acidic residues. Positions 136–164 (KSPEQIEREANSAGVSPVNPNDPTTAGNS) are disordered. The segment covering 153-164 (VNPNDPTTAGNS) has biased composition (polar residues).

Belongs to the complex I LYR family. SDHAF3 subfamily. As to quaternary structure, interacts with the iron-sulfur protein subunit within the SDH catalytic dimer.

The protein resides in the mitochondrion matrix. Plays an essential role in the assembly of succinate dehydrogenase (SDH), an enzyme complex (also referred to as respiratory complex II) that is a component of both the tricarboxylic acid (TCA) cycle and the mitochondrial electron transport chain, and which couples the oxidation of succinate to fumarate with the reduction of ubiquinone (coenzyme Q) to ubiquinol. Promotes maturation of the iron-sulfur protein subunit of the SDH catalytic dimer, protecting it from the deleterious effects of oxidants. May act together with SDHAF1. In Cryptococcus neoformans var. neoformans serotype D (strain B-3501A) (Filobasidiella neoformans), this protein is Succinate dehydrogenase assembly factor 3, mitochondrial.